Here is a 403-residue protein sequence, read N- to C-terminus: MQMPKTLRIRNGDKVRSTFSAQEYANRQARLRAHLAAENIDAAIFTSYHNINYYSDFLYCSFGRPYALVVTEDDVISISANIDGGQPWRRTVGTDNIVYTDWQRDNYFAAIQQALPKARRIGIEHDHLNLQNRDKLAARYPDAELVDVAAACMRMRMIKSAEEHVMIRHGARIADIGGAAVVEALGDQVPEYEVALHATQAMVRAIADTFEDVELMDTWTWFQSGINTDGAHNPVTTRKVNKGDILSLNCFPMIAGYYTALERTLFLDHCSDDHLRLWQVNVEVHEAGLKLIKPGARCSDIARELNEIFLKHDVLQYRTFGYGHSFGTLSHYYGREAGLELREDIDTVLEPGMVVSMEPMIMLPEGLPGAGGYREHDILIVNENGAENITKFPYGPEKNIIRK.

Histidine 232 is a catalytic residue.

It belongs to the peptidase M24 family. Creatinase subfamily. Homodimer.

It catalyses the reaction creatine + H2O = sarcosine + urea. This Pseudomonas putida (Arthrobacter siderocapsulatus) protein is Creatinase.